The chain runs to 564 residues: Laccase-22 (564 aa).

The first 25 residues, 1-25, serve as a signal peptide directing secretion; sequence MAVLPESRRLSLLLMAACFLLQALS. Plastocyanin-like domains follow at residues 36 to 152 and 162 to 314; these read NVVM…PKLG and KEAV…YANT. 2 N-linked (GlcNAc...) asparagine glycosylation sites follow: Asn41 and Asn82. The Cu cation site is built by His86 and His88. The N-linked (GlcNAc...) asparagine glycan is linked to Asn118. The Cu cation site is built by His131 and His133. 8 N-linked (GlcNAc...) asparagine glycosylation sites follow: Asn191, Asn302, Asn331, Asn379, Asn389, Asn424, Asn437, and Asn447. Positions 414–548 constitute a Plastocyanin-like 3 domain; that stretch reads DFPATPLHKF…KMAFVVDNGK (135 aa). His465, His468, His470, His527, Cys528, His529, and His533 together coordinate Cu cation.

The protein belongs to the multicopper oxidase family. Requires Cu cation as cofactor.

Its subcellular location is the secreted. It localises to the extracellular space. It is found in the apoplast. It carries out the reaction 4 hydroquinone + O2 = 4 benzosemiquinone + 2 H2O. Functionally, lignin degradation and detoxification of lignin-derived products. This is Laccase-22 (LAC22) from Oryza sativa subsp. japonica (Rice).